The chain runs to 852 residues: Tiger protein I3 (852 aa).

The signal sequence occupies residues 1–18 (MKILLFFILFYLFSFSIS). Residues 19-830 (YDEVIPLGYE…DVHQYSDARN (812 aa)) are Extracellular-facing. N-linked (GlcNAc...) asparagine glycosylation is found at N31, N47, N67, N97, N129, N201, N215, N228, N260, N323, N352, N356, N404, N441, N476, N483, N501, N512, N574, N592, N635, N658, N661, N679, N680, N723, N757, N761, N773, N785, and N800. Residues 290–367 (IPSIVNSIPK…SSPIAVSIND (78 aa)) enclose the IPT/TIG domain. A helical transmembrane segment spans residues 831-851 (IFQNLLLSILIIIIISLFISN). I852 is a topological domain (cytoplasmic).

The protein localises to the membrane. The polypeptide is Tiger protein I3 (tgrI3) (Dictyostelium discoideum (Social amoeba)).